The following is a 329-amino-acid chain: D-alanine--D-alanine ligase (329 aa).

The ATP-grasp domain occupies 120-326 (KLWYDAIGIP…FHEFLADCIN (207 aa)). 150 to 205 (AFDKWGKVFVKAARQGSSVGCYSVTNKQSVSQAVNDAFGYSEQVLVEKSVKPRELE) serves as a coordination point for ATP. Asp280, Glu293, and Asn295 together coordinate Mg(2+).

This sequence belongs to the D-alanine--D-alanine ligase family. The cofactor is Mg(2+). Mn(2+) is required as a cofactor.

The protein resides in the cytoplasm. It carries out the reaction 2 D-alanine + ATP = D-alanyl-D-alanine + ADP + phosphate + H(+). It participates in cell wall biogenesis; peptidoglycan biosynthesis. Cell wall formation. This is D-alanine--D-alanine ligase from Vibrio campbellii (strain ATCC BAA-1116).